The primary structure comprises 286 residues: Acetylglutamate kinase (286 aa).

Substrate is bound by residues 63–64, Arg-85, and Asn-178; that span reads GG.

Belongs to the acetylglutamate kinase family. ArgB subfamily.

Its subcellular location is the cytoplasm. The catalysed reaction is N-acetyl-L-glutamate + ATP = N-acetyl-L-glutamyl 5-phosphate + ADP. Its pathway is amino-acid biosynthesis; L-arginine biosynthesis; N(2)-acetyl-L-ornithine from L-glutamate: step 2/4. Catalyzes the ATP-dependent phosphorylation of N-acetyl-L-glutamate. This chain is Acetylglutamate kinase, found in Clostridioides difficile (strain 630) (Peptoclostridium difficile).